An 87-amino-acid chain; its full sequence is Translation initiation factor IF-1 2 (87 aa).

Positions 1–72 (MAKEELLELD…TKGRINFRHK (72 aa)) constitute an S1-like domain.

This sequence belongs to the IF-1 family. In terms of assembly, component of the 30S ribosomal translation pre-initiation complex which assembles on the 30S ribosome in the order IF-2 and IF-3, IF-1 and N-formylmethionyl-tRNA(fMet); mRNA recruitment can occur at any time during PIC assembly.

It localises to the cytoplasm. Functionally, one of the essential components for the initiation of protein synthesis. Stabilizes the binding of IF-2 and IF-3 on the 30S subunit to which N-formylmethionyl-tRNA(fMet) subsequently binds. Helps modulate mRNA selection, yielding the 30S pre-initiation complex (PIC). Upon addition of the 50S ribosomal subunit IF-1, IF-2 and IF-3 are released leaving the mature 70S translation initiation complex. The protein is Translation initiation factor IF-1 2 of Burkholderia vietnamiensis (strain G4 / LMG 22486) (Burkholderia cepacia (strain R1808)).